A 218-amino-acid chain; its full sequence is Methylthioribulose-1-phosphate dehydratase (218 aa).

Residues His107 and His109 each contribute to the Zn(2+) site.

This sequence belongs to the aldolase class II family. MtnB subfamily. Zn(2+) serves as cofactor.

The catalysed reaction is 5-(methylsulfanyl)-D-ribulose 1-phosphate = 5-methylsulfanyl-2,3-dioxopentyl phosphate + H2O. It participates in amino-acid biosynthesis; L-methionine biosynthesis via salvage pathway; L-methionine from S-methyl-5-thio-alpha-D-ribose 1-phosphate: step 2/6. In terms of biological role, catalyzes the dehydration of methylthioribulose-1-phosphate (MTRu-1-P) into 2,3-diketo-5-methylthiopentyl-1-phosphate (DK-MTP-1-P). This chain is Methylthioribulose-1-phosphate dehydratase, found in Xylella fastidiosa (strain 9a5c).